We begin with the raw amino-acid sequence, 165 residues long: Hydroxyproline-rich systemin A (165 aa).

A signal peptide spans 1 to 18 (MRVLFLIYLILSPFGAEA). The propeptide occupies 19 to 35 (RTLLENHEGLNVGSGYG). Disordered regions lie at residues 33-70 (GYGRGANLPPPSPASSPPSKEVSNSVSPTRTDEKTSEN) and 142-165 (YWNRKPLSPPSPKPADGQRPLHSY). Residues proline 42, proline 43, proline 45, proline 49, and proline 50 each carry the 4-hydroxyproline modification. O-linked (Ara...) hydroxyproline glycans are attached at residues proline 42, proline 43, proline 45, proline 49, and proline 50. The propeptide occupies 54–143 (VSNSVSPTRT…FDSKSDERYW (90 aa)). Proline 150, proline 151, and proline 153 each carry 4-hydroxyproline. 3 O-linked (Ara...) hydroxyproline glycosylation sites follow: proline 150, proline 151, and proline 153. The propeptide occupies 162–165 (LHSY).

In terms of processing, O-glycosylated; contains pentose side chains. Expressed in leaves.

The protein resides in the secreted. Functionally, activates a lipid-based signal transduction pathway in which linolenic acid is converted to jasmonic acid, a potent activator of defense gene transcription, including proteinase inhibitors. In Nicotiana tabacum (Common tobacco), this protein is Hydroxyproline-rich systemin A.